A 503-amino-acid chain; its full sequence is Cytochrome P450 3A8 (503 aa).

Cys442 is a heme binding site.

This sequence belongs to the cytochrome P450 family. Heme serves as cofactor.

It localises to the endoplasmic reticulum membrane. The protein resides in the microsome membrane. The enzyme catalyses an organic molecule + reduced [NADPH--hemoprotein reductase] + O2 = an alcohol + oxidized [NADPH--hemoprotein reductase] + H2O + H(+). Catalyzes nifedipine and nilvadipine oxidations. The sequence is that of Cytochrome P450 3A8 (CYP3A8) from Macaca fascicularis (Crab-eating macaque).